Consider the following 172-residue polypeptide: Large ribosomal subunit protein uL10 (172 aa).

This sequence belongs to the universal ribosomal protein uL10 family. As to quaternary structure, part of the ribosomal stalk of the 50S ribosomal subunit. The N-terminus interacts with L11 and the large rRNA to form the base of the stalk. The C-terminus forms an elongated spine to which L12 dimers bind in a sequential fashion forming a multimeric L10(L12)X complex.

Forms part of the ribosomal stalk, playing a central role in the interaction of the ribosome with GTP-bound translation factors. This is Large ribosomal subunit protein uL10 from Rhizobium leguminosarum bv. trifolii (strain WSM2304).